A 285-amino-acid chain; its full sequence is Polyamine aminopropyltransferase (285 aa).

In terms of domain architecture, PABS spans 5-241; it reads DNWYIEHFQP…GWWSVTMASK (237 aa). Position 35 (Gln35) interacts with S-methyl-5'-thioadenosine. Residues His66 and Asp90 each coordinate spermidine. S-methyl-5'-thioadenosine contacts are provided by residues Asp110 and 141–142; that span reads DG. Asp160 functions as the Proton acceptor in the catalytic mechanism. Position 160–163 (160–163) interacts with spermidine; it reads DSTD. Pro167 contacts S-methyl-5'-thioadenosine.

This sequence belongs to the spermidine/spermine synthase family. In terms of assembly, homodimer or homotetramer.

It is found in the cytoplasm. It catalyses the reaction S-adenosyl 3-(methylsulfanyl)propylamine + putrescine = S-methyl-5'-thioadenosine + spermidine + H(+). It participates in amine and polyamine biosynthesis; spermidine biosynthesis; spermidine from putrescine: step 1/1. Functionally, catalyzes the irreversible transfer of a propylamine group from the amino donor S-adenosylmethioninamine (decarboxy-AdoMet) to putrescine (1,4-diaminobutane) to yield spermidine. The chain is Polyamine aminopropyltransferase from Xanthomonas campestris pv. campestris (strain 8004).